We begin with the raw amino-acid sequence, 210 residues long: Type III pantothenate kinase (210 aa).

5 to 12 (DIGNTYLH) is a binding site for ATP. Substrate-binding positions include Tyr-69 and 73–76 (GVDR). Asp-75 (proton acceptor) is an active-site residue. Asp-90 is a binding site for K(+). Ser-93 contributes to the ATP binding site. Thr-145 provides a ligand contact to substrate.

It belongs to the type III pantothenate kinase family. As to quaternary structure, homodimer. NH4(+) is required as a cofactor. K(+) serves as cofactor.

It is found in the cytoplasm. The enzyme catalyses (R)-pantothenate + ATP = (R)-4'-phosphopantothenate + ADP + H(+). Its pathway is cofactor biosynthesis; coenzyme A biosynthesis; CoA from (R)-pantothenate: step 1/5. Functionally, catalyzes the phosphorylation of pantothenate (Pan), the first step in CoA biosynthesis. This chain is Type III pantothenate kinase, found in Wolinella succinogenes (strain ATCC 29543 / DSM 1740 / CCUG 13145 / JCM 31913 / LMG 7466 / NCTC 11488 / FDC 602W) (Vibrio succinogenes).